The following is a 430-amino-acid chain: Protein POLLENLESS 3-LIKE 2 (430 aa).

The tract at residues 1–21 (MMRDVFRPTKSAPCSPAKPLG) is disordered. TPR repeat units follow at residues 40–73 (DSPYVRAKNVQLVEKDPERAIPLFWKAINAGDRV), 74–107 (DSALKDMAIVMKQQNRAEEAIEAIKSLRVRCSDQ), 110–143 (ESLDNILLDLYKRCGRLDDQIGLLKHKLFLIQKG), 170–203 (TRLLGNLGWALMQRDNFVEAEDAYRRALSIAPDN), 205–236 (KMCNLGICLMKQGRIDEAKETLRRVKPAVVDG), and 238–257 (RGVDSHLKAYERAQQMLNDL). Residues 81-107 (AIVMKQQNRAEEAIEAIKSLRVRCSDQ) are a coiled coil. Residues 346–376 (KLKRTRSSSQGMGMLSGIGGDHEGETNTSTR) are disordered.

The protein belongs to the MS5 protein family.

The protein resides in the nucleus. In terms of biological role, probably involved in the regulation of cell division. This is Protein POLLENLESS 3-LIKE 2 from Arabidopsis thaliana (Mouse-ear cress).